The following is a 458-amino-acid chain: ATP synthase subunit beta (458 aa).

An ATP-binding site is contributed by 148-155 (GGAGVGKT).

The protein belongs to the ATPase alpha/beta chains family. In terms of assembly, F-type ATPases have 2 components, CF(1) - the catalytic core - and CF(0) - the membrane proton channel. CF(1) has five subunits: alpha(3), beta(3), gamma(1), delta(1), epsilon(1). CF(0) has three main subunits: a(1), b(2) and c(9-12). The alpha and beta chains form an alternating ring which encloses part of the gamma chain. CF(1) is attached to CF(0) by a central stalk formed by the gamma and epsilon chains, while a peripheral stalk is formed by the delta and b chains.

It localises to the cell inner membrane. The enzyme catalyses ATP + H2O + 4 H(+)(in) = ADP + phosphate + 5 H(+)(out). Produces ATP from ADP in the presence of a proton gradient across the membrane. The catalytic sites are hosted primarily by the beta subunits. The polypeptide is ATP synthase subunit beta (Laribacter hongkongensis (strain HLHK9)).